Consider the following 350-residue polypeptide: Holliday junction branch migration complex subunit RuvB (350 aa).

Positions 4 to 184 are large ATPase domain (RuvB-L); that stretch reads TDRLIAAQPQ…FGIVQRLEFY (181 aa). Residues Ile-23, Arg-24, Gly-65, Lys-68, Thr-69, Thr-70, 131–133, Arg-174, Tyr-184, and Arg-221 contribute to the ATP site; that span reads EDY. Mg(2+) is bound at residue Thr-69. The segment at 185–255 is small ATPAse domain (RuvB-S); it reads AVEELTEIVV…IADQALNMLH (71 aa). A head domain (RuvB-H) region spans residues 258 to 350; sequence RHGLDHMDRR…PLTPPGESDA (93 aa). DNA contacts are provided by Arg-294, Arg-313, and Arg-318.

The protein belongs to the RuvB family. Homohexamer. Forms an RuvA(8)-RuvB(12)-Holliday junction (HJ) complex. HJ DNA is sandwiched between 2 RuvA tetramers; dsDNA enters through RuvA and exits via RuvB. An RuvB hexamer assembles on each DNA strand where it exits the tetramer. Each RuvB hexamer is contacted by two RuvA subunits (via domain III) on 2 adjacent RuvB subunits; this complex drives branch migration. In the full resolvosome a probable DNA-RuvA(4)-RuvB(12)-RuvC(2) complex forms which resolves the HJ.

The protein resides in the cytoplasm. The catalysed reaction is ATP + H2O = ADP + phosphate + H(+). The RuvA-RuvB-RuvC complex processes Holliday junction (HJ) DNA during genetic recombination and DNA repair, while the RuvA-RuvB complex plays an important role in the rescue of blocked DNA replication forks via replication fork reversal (RFR). RuvA specifically binds to HJ cruciform DNA, conferring on it an open structure. The RuvB hexamer acts as an ATP-dependent pump, pulling dsDNA into and through the RuvAB complex. RuvB forms 2 homohexamers on either side of HJ DNA bound by 1 or 2 RuvA tetramers; 4 subunits per hexamer contact DNA at a time. Coordinated motions by a converter formed by DNA-disengaged RuvB subunits stimulates ATP hydrolysis and nucleotide exchange. Immobilization of the converter enables RuvB to convert the ATP-contained energy into a lever motion, pulling 2 nucleotides of DNA out of the RuvA tetramer per ATP hydrolyzed, thus driving DNA branch migration. The RuvB motors rotate together with the DNA substrate, which together with the progressing nucleotide cycle form the mechanistic basis for DNA recombination by continuous HJ branch migration. Branch migration allows RuvC to scan DNA until it finds its consensus sequence, where it cleaves and resolves cruciform DNA. The sequence is that of Holliday junction branch migration complex subunit RuvB from Chromohalobacter salexigens (strain ATCC BAA-138 / DSM 3043 / CIP 106854 / NCIMB 13768 / 1H11).